The following is a 667-amino-acid chain: tRNA 5-methylaminomethyl-2-thiouridine biosynthesis bifunctional protein MnmC (667 aa).

The tRNA (mnm(5)s(2)U34)-methyltransferase stretch occupies residues 1-241 (MHKLTFAQLS…KREMLCGEKA (241 aa)). Positions 268–667 (VGGGIASLFV…RKWLKGSKVV (400 aa)) are FAD-dependent cmnm(5)s(2)U34 oxidoreductase.

The protein in the N-terminal section; belongs to the methyltransferase superfamily. tRNA (mnm(5)s(2)U34)-methyltransferase family. It in the C-terminal section; belongs to the DAO family. The cofactor is FAD.

The protein localises to the cytoplasm. The catalysed reaction is 5-aminomethyl-2-thiouridine(34) in tRNA + S-adenosyl-L-methionine = 5-methylaminomethyl-2-thiouridine(34) in tRNA + S-adenosyl-L-homocysteine + H(+). Functionally, catalyzes the last two steps in the biosynthesis of 5-methylaminomethyl-2-thiouridine (mnm(5)s(2)U) at the wobble position (U34) in tRNA. Catalyzes the FAD-dependent demodification of cmnm(5)s(2)U34 to nm(5)s(2)U34, followed by the transfer of a methyl group from S-adenosyl-L-methionine to nm(5)s(2)U34, to form mnm(5)s(2)U34. This is tRNA 5-methylaminomethyl-2-thiouridine biosynthesis bifunctional protein MnmC from Haemophilus ducreyi (strain 35000HP / ATCC 700724).